The sequence spans 276 residues: Hydroxyethylthiazole kinase (276 aa).

Substrate contacts are provided by methionine 53 and alanine 202.

This sequence belongs to the Thz kinase family. The cofactor is Mg(2+).

The enzyme catalyses 5-(2-hydroxyethyl)-4-methylthiazole + ATP = 4-methyl-5-(2-phosphooxyethyl)-thiazole + ADP + H(+). The protein operates within cofactor biosynthesis; thiamine diphosphate biosynthesis; 4-methyl-5-(2-phosphoethyl)-thiazole from 5-(2-hydroxyethyl)-4-methylthiazole: step 1/1. Thiazole kinase involved in thiamine salvage pathway. In Arabidopsis thaliana (Mouse-ear cress), this protein is Hydroxyethylthiazole kinase (THIM).